Here is a 210-residue protein sequence, read N- to C-terminus: Large ribosomal subunit protein uL4 (210 aa).

Residues 44–54 (QRQGTASTLTR) show a composition bias toward polar residues. Residues 44–96 (QRQGTASTLTRSEVRGGGRKPYKQKGTGRARQGSIRTPLRPGGGVIFGPKPRS) are disordered. A compositionally biased stretch (basic residues) spans 60–71 (GGRKPYKQKGTG).

It belongs to the universal ribosomal protein uL4 family. Part of the 50S ribosomal subunit.

One of the primary rRNA binding proteins, this protein initially binds near the 5'-end of the 23S rRNA. It is important during the early stages of 50S assembly. It makes multiple contacts with different domains of the 23S rRNA in the assembled 50S subunit and ribosome. Its function is as follows. Forms part of the polypeptide exit tunnel. In Prochlorococcus marinus (strain MIT 9515), this protein is Large ribosomal subunit protein uL4.